We begin with the raw amino-acid sequence, 195 residues long: HTH-type transcriptional regulator BetI (195 aa).

The 61-residue stretch at 8-68 folds into the HTH tetR-type domain; that stretch reads SIRRRQLIDA…ATMRDITSQL (61 aa). The segment at residues 31-50 is a DNA-binding region (H-T-H motif); it reads TIAQIARRAGVSTGIISHYF.

Its pathway is amine and polyamine biosynthesis; betaine biosynthesis via choline pathway [regulation]. Functionally, repressor involved in the biosynthesis of the osmoprotectant glycine betaine. It represses transcription of the choline transporter BetT and the genes of BetAB involved in the synthesis of glycine betaine. This is HTH-type transcriptional regulator BetI from Escherichia coli (strain K12 / DH10B).